Here is a 228-residue protein sequence, read N- to C-terminus: E3 ubiquitin-protein ligase RNF114 (228 aa).

An RING-type zinc finger spans residues 29 to 68 (CPVCLEVYEKPVQVPCGHVFCSACLQECLKPKKPVCGVCR). Residues Cys-91 and Cys-94 each contribute to the Zn(2+) site. A C2HC RNF-type zinc finger spans residues 91–110 (CHGCRKNFFLSKIRSHVATC). At Lys-102 the chain carries N6-acetyllysine. Positions 106 and 110 each coordinate Zn(2+). Residue Lys-112 is modified to N6-acetyllysine.

Interacts with XAF1, the interaction increases XAF1 stability and proapoptotic effects, and may regulate IFN signaling. Post-translationally, autoubiquitinated. Polyubiquitinated in the presence of E2 enzymes UBE2D1, UBE2D2 and UBE2D3, but only monoubiquitinated in the presence of UBE2E1. Expressed in numerous tissues, including skin, CD4 lymphocytes and dendritic cells. Highest levels in testis.

The protein resides in the cytoplasm. Its subcellular location is the nucleus. The enzyme catalyses S-ubiquitinyl-[E2 ubiquitin-conjugating enzyme]-L-cysteine + [acceptor protein]-L-lysine = [E2 ubiquitin-conjugating enzyme]-L-cysteine + N(6)-ubiquitinyl-[acceptor protein]-L-lysine.. Its pathway is protein modification; protein ubiquitination. Functionally, E3 ubiquitin-protein ligase that promotes the ubiquitination of various substrates. In turn, participates in the regulation of many biological processes including cell cycle, apoptosis, osteoclastogenesis as well as innate or adaptive immunity. Acts as a negative regulator of NF-kappa-B-dependent transcription by promoting the ubiquitination and stabilization of the NF-kappa-B inhibitor TNFAIP3. May promote the ubiquitination of TRAF6 as well. Also acts as a negative regulator of T-cell activation. Inhibits cellular dsRNA responses and interferon production by targeting MAVS component for proteasomal degradation. Ubiquitinates the CDK inhibitor CDKN1A leading to its degradationand probably also CDKN1B and CDKN1C. This activity stimulates cell cycle G1-to-S phase transition and suppresses cellular senescence. May play a role in spermatogenesis. This is E3 ubiquitin-protein ligase RNF114 (RNF114) from Homo sapiens (Human).